Here is a 198-residue protein sequence, read N- to C-terminus: Endonuclease V (198 aa).

Positions 38 and 101 each coordinate Mg(2+).

Belongs to the endonuclease V family. Requires Mg(2+) as cofactor.

It is found in the cytoplasm. The enzyme catalyses Endonucleolytic cleavage at apurinic or apyrimidinic sites to products with a 5'-phosphate.. In terms of biological role, DNA repair enzyme involved in the repair of deaminated bases. Selectively cleaves double-stranded DNA at the second phosphodiester bond 3' to a deoxyinosine leaving behind the intact lesion on the nicked DNA. In Saccharolobus islandicus (strain M.16.27) (Sulfolobus islandicus), this protein is Endonuclease V.